The primary structure comprises 179 residues: Translation initiation factor IF-3 (179 aa).

It belongs to the IF-3 family. In terms of assembly, monomer.

The protein localises to the cytoplasm. Its function is as follows. IF-3 binds to the 30S ribosomal subunit and shifts the equilibrium between 70S ribosomes and their 50S and 30S subunits in favor of the free subunits, thus enhancing the availability of 30S subunits on which protein synthesis initiation begins. This Zymomonas mobilis subsp. mobilis (strain ATCC 31821 / ZM4 / CP4) protein is Translation initiation factor IF-3.